Reading from the N-terminus, the 691-residue chain is 1-butanol dehydrogenase (cytochrome c) (691 aa).

Residues 1–38 form the signal peptide; sequence MLTTTFARKREESVPLRKGIQRALLGLSCLVLSTTSFA. Glutamate 84 serves as a coordination point for pyrroloquinoline quinone. A disulfide bridge connects residues cysteine 130 and cysteine 131. Pyrroloquinoline quinone-binding positions include arginine 136, threonine 181, and 197 to 198; that span reads GA. Ca(2+)-binding residues include glutamate 199 and aspartate 322. The Proton acceptor role is filled by aspartate 322. Residues lysine 349, 408-409, and valine 558 contribute to the pyrroloquinoline quinone site; that span reads NW. The region spanning 605-684 is the Cytochrome c domain; it reads DDVAEGTGLY…KIKAFILGTA (80 aa). Heme c is bound by residues cysteine 618, cysteine 621, histidine 622, and methionine 661.

The protein belongs to the bacterial PQQ dehydrogenase family. Monomer. Pyrroloquinoline quinone serves as cofactor. The cofactor is Ca(2+). It depends on heme c as a cofactor.

The protein localises to the periplasm. It catalyses the reaction butan-1-ol + 2 Fe(III)-[cytochrome c] = butanal + 2 Fe(II)-[cytochrome c] + 2 H(+). Dehydrogenase activity is increased by ammonium ions. Functionally, involved in the metabolism of butane. Could be important in the detoxification of 1-butanol. Catalyzes the oxidation of 1-butanol to butyraldehyde. Also able to use 1-propanol, 2-pentanol, propionaldehyde and butyraldehyde as substrates. This is 1-butanol dehydrogenase (cytochrome c) from Thauera butanivorans (strain ATCC 43655 / DSM 2080 / JCM 20651 / CCUG 51053 / NBRC 103042 / IAM 12574 / Bu B1211) (Pseudomonas butanovora).